The sequence spans 261 residues: MLTEQIIQSLRAVREQKPLVVNITNYVVMNNTANALLAIGASPIMAHSKQELAEMMSFSGALVINIGTLDSVWTPRMCFAVEQANANNKVVVLDPVGCGASTLRTETSREIARLADKLIIRGNASEIIALAGEQAQSKGVDALDSSDAALGAAQCLVAEYGANVVISGETDYVVTKDSVVTLNNGHPMMPYVTGMGCTLTALTGAFAAVGDESGLAAAAVLGVVGEISAESSRGPGSLQMNLLDELYQLDEETLIQRLKVQ.

M45 lines the substrate pocket. Residues R121 and S167 each contribute to the ATP site. Residue G194 coordinates substrate.

Belongs to the Thz kinase family. It depends on Mg(2+) as a cofactor.

The catalysed reaction is 5-(2-hydroxyethyl)-4-methylthiazole + ATP = 4-methyl-5-(2-phosphooxyethyl)-thiazole + ADP + H(+). Its pathway is cofactor biosynthesis; thiamine diphosphate biosynthesis; 4-methyl-5-(2-phosphoethyl)-thiazole from 5-(2-hydroxyethyl)-4-methylthiazole: step 1/1. In terms of biological role, catalyzes the phosphorylation of the hydroxyl group of 4-methyl-5-beta-hydroxyethylthiazole (THZ). The polypeptide is Hydroxyethylthiazole kinase (Vibrio atlanticus (strain LGP32) (Vibrio splendidus (strain Mel32))).